Here is a 311-residue protein sequence, read N- to C-terminus: Methionyl-tRNA formyltransferase (311 aa).

S110–P113 is a (6S)-5,6,7,8-tetrahydrofolate binding site.

This sequence belongs to the Fmt family.

It catalyses the reaction L-methionyl-tRNA(fMet) + (6R)-10-formyltetrahydrofolate = N-formyl-L-methionyl-tRNA(fMet) + (6S)-5,6,7,8-tetrahydrofolate + H(+). Attaches a formyl group to the free amino group of methionyl-tRNA(fMet). The formyl group appears to play a dual role in the initiator identity of N-formylmethionyl-tRNA by promoting its recognition by IF2 and preventing the misappropriation of this tRNA by the elongation apparatus. The polypeptide is Methionyl-tRNA formyltransferase (Streptococcus pyogenes serotype M2 (strain MGAS10270)).